The primary structure comprises 159 residues: Phosphopantetheine adenylyltransferase (159 aa).

The protein belongs to the eukaryotic CoaD family.

It is found in the cytoplasm. The enzyme catalyses (R)-4'-phosphopantetheine + ATP + H(+) = 3'-dephospho-CoA + diphosphate. It functions in the pathway cofactor biosynthesis; coenzyme A biosynthesis. Reversibly transfers an adenylyl group from ATP to 4'-phosphopantetheine, yielding dephospho-CoA (dPCoA) and pyrophosphate. This chain is Phosphopantetheine adenylyltransferase, found in Thermococcus gammatolerans (strain DSM 15229 / JCM 11827 / EJ3).